The following is a 375-amino-acid chain: DNA replication and repair protein RecF (375 aa).

30–37 (GKNAQGKT) provides a ligand contact to ATP.

It belongs to the RecF family.

It is found in the cytoplasm. Its function is as follows. The RecF protein is involved in DNA metabolism; it is required for DNA replication and normal SOS inducibility. RecF binds preferentially to single-stranded, linear DNA. It also seems to bind ATP. The protein is DNA replication and repair protein RecF of Lactobacillus acidophilus (strain ATCC 700396 / NCK56 / N2 / NCFM).